Consider the following 402-residue polypeptide: NADH-quinone oxidoreductase subunit D 2 (402 aa).

The protein belongs to the complex I 49 kDa subunit family. In terms of assembly, NDH-1 is composed of 14 different subunits. Subunits NuoB, C, D, E, F, and G constitute the peripheral sector of the complex.

The protein localises to the cell inner membrane. The enzyme catalyses a quinone + NADH + 5 H(+)(in) = a quinol + NAD(+) + 4 H(+)(out). Its function is as follows. NDH-1 shuttles electrons from NADH, via FMN and iron-sulfur (Fe-S) centers, to quinones in the respiratory chain. The immediate electron acceptor for the enzyme in this species is believed to be ubiquinone. Couples the redox reaction to proton translocation (for every two electrons transferred, four hydrogen ions are translocated across the cytoplasmic membrane), and thus conserves the redox energy in a proton gradient. The chain is NADH-quinone oxidoreductase subunit D 2 from Nitrobacter hamburgensis (strain DSM 10229 / NCIMB 13809 / X14).